The following is an 815-amino-acid chain: Cell division control protein 48 homolog D (815 aa).

Ala-2 carries the post-translational modification N-acetylalanine. A Phosphoserine modification is found at Ser-42. ATP contacts are provided by residues 249 to 256 (GPPGSGKT) and 522 to 529 (GPPGCGKT). The residue at position 720 (Ser-720) is a Phosphoserine. A disordered region spans residues 772–815 (GSEFRFPDAPTGTTGAFPGAAATVGGVDPFATSGGAADDDDLYS). The span at 780–798 (APTGTTGAFPGAAATVGGV) shows a compositional bias: low complexity.

It belongs to the AAA ATPase family.

The protein resides in the nucleus. The protein localises to the cytoplasm. It localises to the cytoskeleton. It is found in the phragmoplast. In terms of biological role, probably functions in cell division and growth processes. Interacts with certain SNAREs as part of specialized membrane fusion events where vesicles from the same organelle fuse (homotypic fusion). The sequence is that of Cell division control protein 48 homolog D (CDC48D) from Arabidopsis thaliana (Mouse-ear cress).